Here is a 617-residue protein sequence, read N- to C-terminus: Dihydroxy-acid dehydratase (617 aa).

Position 81 (aspartate 81) interacts with Mg(2+). Cysteine 122 lines the [2Fe-2S] cluster pocket. Mg(2+) is bound by residues aspartate 123 and lysine 124. Residue lysine 124 is modified to N6-carboxylysine. Residue cysteine 195 coordinates [2Fe-2S] cluster. Mg(2+) is bound at residue glutamate 492. Serine 518 serves as the catalytic Proton acceptor.

It belongs to the IlvD/Edd family. In terms of assembly, homodimer. The cofactor is [2Fe-2S] cluster. Requires Mg(2+) as cofactor.

It catalyses the reaction (2R)-2,3-dihydroxy-3-methylbutanoate = 3-methyl-2-oxobutanoate + H2O. It carries out the reaction (2R,3R)-2,3-dihydroxy-3-methylpentanoate = (S)-3-methyl-2-oxopentanoate + H2O. It participates in amino-acid biosynthesis; L-isoleucine biosynthesis; L-isoleucine from 2-oxobutanoate: step 3/4. Its pathway is amino-acid biosynthesis; L-valine biosynthesis; L-valine from pyruvate: step 3/4. In terms of biological role, functions in the biosynthesis of branched-chain amino acids. Catalyzes the dehydration of (2R,3R)-2,3-dihydroxy-3-methylpentanoate (2,3-dihydroxy-3-methylvalerate) into 2-oxo-3-methylpentanoate (2-oxo-3-methylvalerate) and of (2R)-2,3-dihydroxy-3-methylbutanoate (2,3-dihydroxyisovalerate) into 2-oxo-3-methylbutanoate (2-oxoisovalerate), the penultimate precursor to L-isoleucine and L-valine, respectively. The sequence is that of Dihydroxy-acid dehydratase from Xanthobacter autotrophicus (strain ATCC BAA-1158 / Py2).